Reading from the N-terminus, the 493-residue chain is Glutamyl-tRNA(Gln) amidotransferase subunit A (493 aa).

Residues Lys-79 and Ser-159 each act as charge relay system in the active site. Ser-183 (acyl-ester intermediate) is an active-site residue.

It belongs to the amidase family. GatA subfamily. Heterotrimer of A, B and C subunits.

The enzyme catalyses L-glutamyl-tRNA(Gln) + L-glutamine + ATP + H2O = L-glutaminyl-tRNA(Gln) + L-glutamate + ADP + phosphate + H(+). Its function is as follows. Allows the formation of correctly charged Gln-tRNA(Gln) through the transamidation of misacylated Glu-tRNA(Gln) in organisms which lack glutaminyl-tRNA synthetase. The reaction takes place in the presence of glutamine and ATP through an activated gamma-phospho-Glu-tRNA(Gln). This is Glutamyl-tRNA(Gln) amidotransferase subunit A from Brucella anthropi (strain ATCC 49188 / DSM 6882 / CCUG 24695 / JCM 21032 / LMG 3331 / NBRC 15819 / NCTC 12168 / Alc 37) (Ochrobactrum anthropi).